A 100-amino-acid chain; its full sequence is Small ribosomal subunit protein uS14c (100 aa).

This sequence belongs to the universal ribosomal protein uS14 family. As to quaternary structure, part of the 30S ribosomal subunit.

The protein localises to the plastid. It is found in the chloroplast. Functionally, binds 16S rRNA, required for the assembly of 30S particles. The polypeptide is Small ribosomal subunit protein uS14c (Liriodendron tulipifera (Tuliptree)).